The primary structure comprises 1358 residues: Nonribosomal peptide synthetase rstn8 (1358 aa).

Residues 1 to 23 (MSHSSHYSPVDSGMVPSSSSTED) are disordered. The interval 261-659 (YRELDRLSSR…LGEVEYRLHQ (399 aa)) is adenylation. One can recognise a Carrier domain in the interval 795 to 872 (ETVSPAESTL…DQASLVRPLV (78 aa)). O-(pantetheine 4'-phosphoryl)serine is present on S832. Residues 909–1322 (EDIYPCTPLQ…DDYSQALHEL (414 aa)) form a condensation region.

Belongs to the NRP synthetase family. Pantetheine 4'-phosphate serves as cofactor.

The catalysed reaction is restrictinol + glycine + H(+) = restricticin + H2O. The protein operates within antifungal biosynthesis. In terms of biological role, nonribosomal peptide synthetase; part of the gene cluster that mediates the biosynthesis of the tetrahydropyranyl antifungal agent restricticin that acts as an inhibitor of CYP51 and blocks the ergosterol biosynthesis. Within the pathway, rstn8 catalyzes the C3 esterification of restrictinol with glycine to yield restricticin. Rstn8 represents an example of the emerging class of single-module NRPS-like enzymes that perform esterification reactions. Rstn8 displays strict substrate specificity toward glycine as no other natural amino acid is accepted. Rstn8 does not recognize desmethylrestrictinol as a substrate, demonstrating that rstn1-catalyzed methylation, possibly protecting the C4-OH, must precede the final esterification step. The highly reducing polyketide synthase rstn3, the short chain dehydrogenase rstn4, the cyclase rstn5, the FAD-dependent monooxygenase rstn6 and the enoylreductase rstn7 are required to generate the first stable intermediate desmethylrestrictinol. Rstn3 with rstn7 biosynthesize the first polyketide chain intermediate that is reduced by rstn4, followed by epoxidation by rstn6 before 6-endo cyclization via epoxide opening by rstn5 leads to desmethylrestrictinol. The methyltransferase rstn1 then catalyzes the C4 O-methylation of desmethylrestrictinol to produce restrictinol, and the nonribosomal peptide synthetase rstn8 catalyzes the C3 esterification of restrictinol with glycine that leads to restricticin. This Aspergillus nomiae NRRL (strain ATCC 15546 / NRRL 13137 / CBS 260.88 / M93) protein is Nonribosomal peptide synthetase rstn8.